Here is a 208-residue protein sequence, read N- to C-terminus: Urease accessory protein UreG 1 (208 aa).

14–21 is a GTP binding site; sequence GPVGSGKT.

This sequence belongs to the SIMIBI class G3E GTPase family. UreG subfamily. In terms of assembly, homodimer. UreD, UreF and UreG form a complex that acts as a GTP-hydrolysis-dependent molecular chaperone, activating the urease apoprotein by helping to assemble the nickel containing metallocenter of UreC. The UreE protein probably delivers the nickel.

Its subcellular location is the cytoplasm. Its function is as follows. Facilitates the functional incorporation of the urease nickel metallocenter. This process requires GTP hydrolysis, probably effectuated by UreG. The sequence is that of Urease accessory protein UreG 1 from Brucella ovis (strain ATCC 25840 / 63/290 / NCTC 10512).